A 675-amino-acid polypeptide reads, in one-letter code: MFKKLFGQMQRIGKALMLPVAILPAAGLLLAIGTAFQGEALQHYLPFIKNDIVQQIANMLTGAGGIIFDNLPIIFALGVAIGLAGGDGVAAIAAFVGFIILNKTMGAFLHVTPDKLSDPTNGYANVLGIPTLQTGVFGGIIIGALAAWCYNKFYNITLPSYLGFFAGKRFVPIMMATTSFILAFPMAIIWPTIQNGLNAFSEGLLDSNTGLAVFLFGFIKRLLIPFGLHHIFHAPFWFEFGSWKNAAGEIIRGDQRIFIEQIREGAHLTSGKFMQGEFPVMMFGLPAAALAIYQTAKPENKKVVAGLMISAALTSFLTGITEPLEFSFLFVAPFLFVIHAVLDGLSFLTLYLLNVHLGYTFSGGFIDYVLLGILPNKTAWWLVIPVGIIYAVIYYFVFRFLIVKFNYKTPGREDKKSSVTTTSASQLPFDVLKAMGGKENIKHLDACITRLRVEVNEKSKVDVAGLKSLGASGVLEVGNNMQAIFGPKSDQIKHDMAKIISGEITKPSETTIDEEVSDDPVHVEDIVETEIYAPGHGEIIPLSEVPDKVFSEKMMGDGIGFVPDSGEIVAPFDGTVKTIFPTKHAIGLESDSGVEVLIHIGIDTVKLNGEGFESLVNTDEPVTQGQPLMKIDLEYLKEHAPSIITPVIITNQEDKTLTIEDVKQVDPGKAIMTIK.

Residues 3–414 (KKLFGQMQRI…FNYKTPGRED (412 aa)) enclose the PTS EIIC type-1 domain. A run of 11 helical transmembrane segments spans residues 16–36 (LMLP…GTAF), 59–79 (MLTG…ALGV), 81–101 (IGLA…FIIL), 126–146 (VLGI…GALA), 170–190 (FVPI…AIIW), 211–231 (LAVF…LHHI), 273–293 (FMQG…LAIY), 303–323 (VVAG…ITEP), 328–348 (FLFV…LSFL), 355–375 (VHLG…GILP), and 378–398 (TAWW…YFVF). Positions 425 to 506 (SQLPFDVLKA…AKIISGEITK (82 aa)) constitute a PTS EIIB type-1 domain. Residue Cys447 is the Phosphocysteine intermediate; for EIIB activity of the active site. One can recognise a PTS EIIA type-1 domain in the interval 547 to 651 (DKVFSEKMMG…SIITPVIITN (105 aa)). His599 acts as the Tele-phosphohistidine intermediate; for EIIA activity in catalysis.

The protein localises to the cell membrane. The catalysed reaction is N(pros)-phospho-L-histidyl-[protein] + D-glucose(out) = D-glucose 6-phosphate(in) + L-histidyl-[protein]. Functionally, the phosphoenolpyruvate-dependent sugar phosphotransferase system (sugar PTS), a major carbohydrate active transport system, catalyzes the phosphorylation of incoming sugar substrates concomitantly with their translocation across the cell membrane. This system is involved in glucose transport. This Staphylococcus epidermidis protein is PTS system glucose-specific EIICBA component (ptsG).